Reading from the N-terminus, the 508-residue chain is 25-hydroxyvitamin D-1 alpha hydroxylase, mitochondrial (508 aa).

Cys-455 provides a ligand contact to heme.

This sequence belongs to the cytochrome P450 family. Heme is required as a cofactor. In terms of tissue distribution, kidney.

It is found in the mitochondrion membrane. The enzyme catalyses calcidiol + 2 reduced [adrenodoxin] + O2 + 2 H(+) = calcitriol + 2 oxidized [adrenodoxin] + H2O. It carries out the reaction secalciferol + 2 reduced [adrenodoxin] + O2 + 2 H(+) = calcitetrol + 2 oxidized [adrenodoxin] + H2O. The catalysed reaction is 25-hydroxy-24-oxocalciol + 2 reduced [adrenodoxin] + O2 + 2 H(+) = (1S)-1,25-dihydroxy-24-oxocalciol + 2 oxidized [adrenodoxin] + H2O. It catalyses the reaction 25-hydroxyvitamin D2 + 2 reduced [adrenodoxin] + O2 + 2 H(+) = 1alpha,25-dihydroxyvitamin D2 + 2 oxidized [adrenodoxin] + H2O. Its pathway is hormone biosynthesis; vitamin D biosynthesis. With respect to regulation, activated by cardiolipin and dioleoyl phosphatidylethanolamine (DOPE), phospholipids found in the inner mitochondrial membrane. Inhibited by high substrate concentration. In terms of biological role, a cytochrome P450 monooxygenase involved in vitamin D metabolism and in calcium and phosphorus homeostasis. Catalyzes the rate-limiting step in the activation of vitamin D in the kidney, namely the hydroxylation of 25-hydroxyvitamin D3/calcidiol at the C1alpha-position to form the hormonally active form of vitamin D3, 1alpha,25-dihydroxyvitamin D3/calcitriol that acts via the vitamin D receptor (VDR). Has 1alpha-hydroxylase activity on vitamin D intermediates of the CYP24A1-mediated inactivation pathway. Converts 24R,25-dihydroxyvitamin D3/secalciferol to 1-alpha,24,25-trihydroxyvitamin D3, an active ligand of VDR. Also active on 25-hydroxyvitamin D2. Mechanistically, uses molecular oxygen inserting one oxygen atom into a substrate, and reducing the second into a water molecule, with two electrons provided by NADPH via FDXR/adrenodoxin reductase and FDX1/adrenodoxin. In Homo sapiens (Human), this protein is 25-hydroxyvitamin D-1 alpha hydroxylase, mitochondrial (CYP27B1).